Reading from the N-terminus, the 126-residue chain is Penicillinase repressor (126 aa).

The segment at residues 7-71 is a DNA-binding region (H-T-H motif); that stretch reads EISMAEWDVM…KSENIYFYSS (65 aa). Positions 74 to 126 are important for dimerization; sequence KEDDIKMKTAKTFLNKLYGGDMKSLVLNFAKNEELNNKEIEELRDILNDISKK.

It belongs to the BlaI transcriptional regulatory family. In terms of assembly, homodimer. In terms of processing, upon exposure to beta-lactams, the protease BlaR1 is activated and cleaves BlaI at a single site. This proteolytic cleavage impairs dimerization and abolishes repressor activity.

Its subcellular location is the cytoplasm. Functionally, transcriptional repressor that constitutively blocks expression of beta-lactamase. Binds DNA as a dimer. The protein is Penicillinase repressor (blaI) of Staphylococcus aureus.